Here is a 251-residue protein sequence, read N- to C-terminus: HTH-type transcriptional regulator UlaR (251 aa).

Positions 3-58 (EAQRHQILLEMLAQLGFVTVEKVVERLGISPATARRDINKLDESGKLKKVRNGAEA) constitute an HTH deoR-type domain. The H-T-H motif DNA-binding region spans 20 to 39 (VTVEKVVERLGISPATARRD).

Its subcellular location is the cytoplasm. In terms of biological role, represses ulaG and the ulaABCDEF operon. The protein is HTH-type transcriptional regulator UlaR of Escherichia coli (strain SMS-3-5 / SECEC).